The chain runs to 248 residues: Ribonuclease PH (248 aa).

Phosphate-binding positions include Arg86 and Gly124 to Arg126.

The protein belongs to the RNase PH family. Homohexameric ring arranged as a trimer of dimers.

It carries out the reaction tRNA(n+1) + phosphate = tRNA(n) + a ribonucleoside 5'-diphosphate. In terms of biological role, phosphorolytic 3'-5' exoribonuclease that plays an important role in tRNA 3'-end maturation. Removes nucleotide residues following the 3'-CCA terminus of tRNAs; can also add nucleotides to the ends of RNA molecules by using nucleoside diphosphates as substrates, but this may not be physiologically important. Probably plays a role in initiation of 16S rRNA degradation (leading to ribosome degradation) during starvation. This is Ribonuclease PH from Clostridium perfringens (strain ATCC 13124 / DSM 756 / JCM 1290 / NCIMB 6125 / NCTC 8237 / Type A).